The primary structure comprises 935 residues: Isoleucine--tRNA ligase (935 aa).

The short motif at 58 to 68 (PYANGNLHLGH) is the 'HIGH' region element. Position 559 (glutamate 559) interacts with L-isoleucyl-5'-AMP. Positions 600 to 604 (KMSKS) match the 'KMSKS' region motif. Lysine 603 is an ATP binding site. Zn(2+) contacts are provided by cysteine 898, cysteine 901, cysteine 918, and cysteine 921.

The protein belongs to the class-I aminoacyl-tRNA synthetase family. IleS type 1 subfamily. In terms of assembly, monomer. Zn(2+) is required as a cofactor.

Its subcellular location is the cytoplasm. It carries out the reaction tRNA(Ile) + L-isoleucine + ATP = L-isoleucyl-tRNA(Ile) + AMP + diphosphate. Its function is as follows. Catalyzes the attachment of isoleucine to tRNA(Ile). As IleRS can inadvertently accommodate and process structurally similar amino acids such as valine, to avoid such errors it has two additional distinct tRNA(Ile)-dependent editing activities. One activity is designated as 'pretransfer' editing and involves the hydrolysis of activated Val-AMP. The other activity is designated 'posttransfer' editing and involves deacylation of mischarged Val-tRNA(Ile). The sequence is that of Isoleucine--tRNA ligase from Haemophilus ducreyi (strain 35000HP / ATCC 700724).